A 206-amino-acid polypeptide reads, in one-letter code: Large ribosomal subunit protein uL4 (206 aa).

The protein belongs to the universal ribosomal protein uL4 family. As to quaternary structure, part of the 50S ribosomal subunit.

In terms of biological role, one of the primary rRNA binding proteins, this protein initially binds near the 5'-end of the 23S rRNA. It is important during the early stages of 50S assembly. It makes multiple contacts with different domains of the 23S rRNA in the assembled 50S subunit and ribosome. Functionally, forms part of the polypeptide exit tunnel. The chain is Large ribosomal subunit protein uL4 from Methylorubrum populi (strain ATCC BAA-705 / NCIMB 13946 / BJ001) (Methylobacterium populi).